A 485-amino-acid chain; its full sequence is E3 ubiquitin-protein ligase TRIM58 (485 aa).

The RING-type zinc finger occupies 15–59; it reads CSVCLDFLQEPISVDCGHSFCLRCISEFCEKSDSAQGVYACPQCR. The segment at 90-131 adopts a B box-type zinc-finger fold; it reads AGSRQCARHGEDLSHFCEEDQTMLCWVCDTSPEHRSHRTETL. Zn(2+) is bound by residues cysteine 95, histidine 98, cysteine 117, and histidine 123. The stretch at 192–241 forms a coiled coil; it reads LAQEEQLQLRRLEEEERATLQRLRDSRNRLAQQNKALKELAEELEERSQR. A B30.2/SPRY domain is found at 271–466; it reads DLKTVCRIPG…LPPMTEAAPG (196 aa).

This sequence belongs to the TRIM/RBCC family. Expressed in erythroblasts.

It catalyses the reaction S-ubiquitinyl-[E2 ubiquitin-conjugating enzyme]-L-cysteine + [acceptor protein]-L-lysine = [E2 ubiquitin-conjugating enzyme]-L-cysteine + N(6)-ubiquitinyl-[acceptor protein]-L-lysine.. It functions in the pathway protein modification; protein ubiquitination. In terms of biological role, E3 ubiquitin ligase induced during late erythropoiesis. Directly binds and ubiquitinates the intermediate chain of the microtubule motor dynein (DYNC1LI1/DYNC1LI2), stimulating the degradation of the dynein holoprotein complex. May participate in the erythroblast enucleation process through regulation of nuclear polarization. This chain is E3 ubiquitin-protein ligase TRIM58 (Trim58), found in Mus musculus (Mouse).